A 113-amino-acid polypeptide reads, in one-letter code: Large ribosomal subunit protein uL22 (113 aa).

Belongs to the universal ribosomal protein uL22 family. As to quaternary structure, part of the 50S ribosomal subunit.

Its function is as follows. This protein binds specifically to 23S rRNA; its binding is stimulated by other ribosomal proteins, e.g. L4, L17, and L20. It is important during the early stages of 50S assembly. It makes multiple contacts with different domains of the 23S rRNA in the assembled 50S subunit and ribosome. In terms of biological role, the globular domain of the protein is located near the polypeptide exit tunnel on the outside of the subunit, while an extended beta-hairpin is found that lines the wall of the exit tunnel in the center of the 70S ribosome. This Thermus thermophilus (strain ATCC BAA-163 / DSM 7039 / HB27) protein is Large ribosomal subunit protein uL22.